A 750-amino-acid chain; its full sequence is MENNSFNVLANNNMSSFPLFNSKIEPSIAPALIAVAPIAKYLATALAKWALKQGFAKLKSEIFPGNETATMEKVRLEVQTILNQTLQTDRVATLKAEYEGFIHLGKVFTDYVSQSTFTPATAKTHFLNMSNLLIQRLPQFEIAGYEGVSISLFTQMCTLHLGLLKDGILAGSDWGFTPEDKDSLICQFNRYVNEYNTRMMGLYSIEFGRLLAKNLNEALNFRNMCSLYVFPFSEAWYLLRYEGTKLENTLSLWNFVGEDIGGILHNDWKGALYKLLMGATNQRLANVRFNYSYFSDTQGTIHRENILGAHPTYNGEQTPTGWIGNGRLGRFSAPYSNELEITKVEQEITYNNKGDHSNSIVPANTRNEILTATVPITADPFFKTADINWRYFSQGLYYGWNIKFDDRVILNSRVPGGIPSNRLEYDGYYIRAVSACPRNVPLSYNHNYLTLTYNRLEYDAPTTQNIIVGFSPNNTKSFYARNSHYLSATNDAYVIPALQFATVSDRSFLEDTPDQATDGSIKFTETVLGNEAKYSIRLNTGFNTATRYRLVIRFKATARLAAGIRVRSQNSGNNRLLGGIPVEGNSGWVDYITDSFTFNDLGITTASTNAFFSIDSDGVNASQQWYLSKLILVKDFVNNSGFRNQVPLAPYVIARCPNTFFVSNNTSSGYEQGYNDNYNQNTSSGYEQGYNDNYNQNTSSGYEQGYNDNYNQNTSSGYEQGYNDNYNQNTSSGYEQGYNDNYNQNTSSGV.

The disordered stretch occupies residues 672-750 (QGYNDNYNQN…NYNQNTSSGV (79 aa)).

Belongs to the delta endotoxin family.

Functionally, promotes colloidosmotic lysis by binding to the midgut epithelial cells of mosquito larvae such as Aedes aegypti, Anopheles albimanus and Culex quinquefasciatus. The sequence is that of Pesticidal crystal protein Cry11Bb (cry11Bb) from Bacillus thuringiensis subsp. medellin.